Reading from the N-terminus, the 489-residue chain is Glycogen synthase (489 aa).

Arg20 is an ADP-alpha-D-glucose binding site.

This sequence belongs to the glycosyltransferase 1 family. Bacterial/plant glycogen synthase subfamily.

The enzyme catalyses [(1-&gt;4)-alpha-D-glucosyl](n) + ADP-alpha-D-glucose = [(1-&gt;4)-alpha-D-glucosyl](n+1) + ADP + H(+). It functions in the pathway glycan biosynthesis; glycogen biosynthesis. Synthesizes alpha-1,4-glucan chains using ADP-glucose. The sequence is that of Glycogen synthase from Pelodictyon phaeoclathratiforme (strain DSM 5477 / BU-1).